Here is a 2760-residue protein sequence, read N- to C-terminus: A-kinase anchor protein 13 (2760 aa).

Disordered stretches follow at residues 356–388, 442–517, 530–577, 604–711, 729–857, 890–940, 954–1029, and 1132–1162; these read CSHKKNKDTGRPGEGVEPASAVDSRSASHQDSC, PDAR…EPKQ, AAGA…VLPA, SSLD…AAHN, EKDL…EQEG, GGSI…QEIS, EKAL…ASEA, and EGTDLSCPTSKSKETPNNEETTQPPARDLPT. Residues 378–388 show a composition bias toward polar residues; sequence DSRSASHQDSC. Over residues 442–454 the composition is skewed to basic and acidic residues; the sequence is PDARQHSSGRELP. Positions 482-504 are important for interaction with PRKAR2A; the sequence is QNSKPQVGESAKERLENSDISSA. Low complexity predominate over residues 530 to 547; the sequence is AAGADAPAEASPAWSPEE. 3 stretches are compositionally biased toward polar residues: residues 620–638, 654–664, and 701–711; these read KQNSESSAQHAQSLNSQAP, CPQSTETSSGG, and DTVTSDTAAHN. The segment covering 769-780 has biased composition (low complexity); sequence SSFSLASSPESE. Residue S776 is modified to Phosphoserine. A Phosphothreonine modification is found at T801. Residues 814–826 show a composition bias toward basic and acidic residues; the sequence is PDGRDLNDTDKVG. Polar residues predominate over residues 839-849; it reads ELQTSMGNTSP. The segment covering 906 to 931 has biased composition (basic and acidic residues); the sequence is GKDKATKCPSVKEDVHSSEMSREDQR. The residue at position 932 (T932) is a Phosphothreonine. 2 stretches are compositionally biased toward polar residues: residues 958–972 and 1001–1020; these read QHSNSPDTPSACLQT and TSLSADSEQKTSSTEQSGSS. Position 962 is a phosphoserine (S962). Residues 1213-1228 form an important for interaction with PRKAR2A region; that stretch reads SIEETATRIVEAVIKQ. 3 disordered regions span residues 1392-1411, 1425-1508, and 1520-1539; these read GVLQRESGSDSDLFHSPSDE, LLCD…VPAN, and SPFRRHSWGPGKNAASDAEM. Low complexity predominate over residues 1428–1439; it reads DTTGSSSSTDDT. Residues 1449–1472 are compositionally biased toward polar residues; the sequence is GSDVSLPQTSKLNRSRNHQSSNGF. Residues S1450, S1468, S1501, S1526, and S1585 each carry the phosphoserine modification. Residues 1546-1695 are important for interaction with MAP2K3; sequence QVLGHVVRRP…SRPFHSASAN (150 aa). Positions 1592–1628 are disordered; sequence GGGVGNKPSSSLEISSANSSELRNPFSGEEQRSSLMS. Positions 1600–1611 are enriched in low complexity; sequence SSSLEISSANSS. Phosphoserine is present on residues S1625, S1628, and S1630. The residue at position 1654 (K1654) is an N6-methyllysine. The interval 1733-1755 is disordered; it reads RNKMSSSKKSKKEKDKKTLNGHT. The Phorbol-ester/DAG-type zinc-finger motif lies at 1753 to 1800; the sequence is GHTFSPIPIVGPINCSQCMKPFTNKDAYTCASCGAFVHKGCRENLASC. A phosphoserine mark is found at S1838, S1857, and S1891. Residues 1881-2760 form an interaction with ESR1 region; the sequence is MSNTWKFLSH…VPAEGEEIFC (880 aa). T1892 carries the phosphothreonine modification. Phosphoserine occurs at positions 1894 and 1907. The DH domain maps to 1956 to 2153; that stretch reads KRQEVIYELM…KDVIGAVDSK (198 aa). One can recognise a PH domain in the interval 2176-2280; that stretch reads MRMKSGQMFA…WIQIIQDTIN (105 aa). Phosphoserine occurs at positions 2292 and 2345. The stretch at 2292–2329 forms a coiled coil; sequence SENEEEKRLLDTKARELKEQLQQKDQQILLLLEEKEMI. T2415 is subject to Phosphothreonine. The segment at 2422-2450 is disordered; sequence HQLNASKGGEKEEGDDGQDLRRTESDSGL. Basic and acidic residues predominate over residues 2439–2450; sequence QDLRRTESDSGL. S2511 and S2514 each carry phosphoserine. The stretch at 2516-2632 forms a coiled coil; the sequence is LIEQEKQRSL…LSQRQMEQDL (117 aa). Disordered stretches follow at residues 2568–2588 and 2660–2760; these read AEREETVRRRQQDLERDREEL and TPSI…EIFC. Polar residues-rich tracts occupy residues 2660–2684 and 2696–2711; these read TPSITKSGSLDSELSVSPKRNSISR and SSASQTKVPEGQSQAP. S2676 bears the Phosphoserine mark. Positions 2743–2752 are enriched in low complexity; it reads PGDGPAPEVP.

In terms of assembly, interacts with the cAMP-dependent protein kinase (PKA) holoenzyme and with the regulatory subunit PRKAR2A. Interacts with RHOA. Also interacts with RHOB and RHOC. Identified in a ternary complex with RHOA and PRKAR2A. Identified in a complex with NR3C1 and RHOA. Interacts with BRAF and KSR1. Identified in a complex with BRAF and KSR1. Component of a signaling complex containing at least AKAP13, PKN1, MAPK14, ZAK and MAP2K3. Within this complex, AKAP13 interacts directly with PKN1, which in turn recruits MAPK14, MAP2K3 and ZAK. Interacts (phosphorylated form) with YWHAB and YWHAZ. Interaction with YWHAB inhibits activation of RHOA, interferes with PKN1 binding and activation of MAP kinases. Interacts with GNA12. Interacts with IKBKB. Interacts with ESR1, THRA, PPARA and NME2. Interacts (via the C-terminal domain after the PH domain) with MEF2C and RXRB. Interacts (via the C-terminal domain after the PH domain) with PRKD1. As to expression, detected in bone osteoblasts (at protein level).

The protein localises to the cytoplasm. It localises to the cytosol. The protein resides in the cell cortex. Its subcellular location is the nucleus. It is found in the membrane. In terms of biological role, scaffold protein that plays an important role in assembling signaling complexes downstream of several types of G protein-coupled receptors. Activates RHOA in response to signaling via G protein-coupled receptors via its function as Rho guanine nucleotide exchange factor. May also activate other Rho family members. Part of a kinase signaling complex that links ADRA1A and ADRA1B adrenergic receptor signaling to the activation of downstream p38 MAP kinases, such as MAPK11 and MAPK14. Part of a signaling complex that links ADRA1B signaling to the activation of RHOA and IKBKB/IKKB, leading to increased NF-kappa-B transcriptional activity. Part of a RHOA-dependent signaling cascade that mediates responses to lysophosphatidic acid (LPA), a signaling molecule that activates G-protein coupled receptors and potentiates transcriptional activation of the glucocorticoid receptor NR3C1. Part of a signaling cascade that stimulates MEF2C-dependent gene expression in response to lysophosphatidic acid (LPA). Part of a signaling pathway that activates MAPK11 and/or MAPK14 and leads to increased transcription activation of the estrogen receptors ESR1 and ESR2. Part of a signaling cascade that links cAMP and EGFR signaling to BRAF signaling and to PKA-mediated phosphorylation of KSR1, leading to the activation of downstream MAP kinases, such as MAPK1 or MAPK3. Functions as a scaffold protein that anchors cAMP-dependent protein kinase (PKA) and PRKD1. This promotes activation of PRKD1, leading to increased phosphorylation of HDAC5 and ultimately cardiomyocyte hypertrophy. Has no guanine nucleotide exchange activity on CDC42, Ras or Rac. Required for normal embryonic heart development, and in particular for normal sarcomere formation in the developing cardiomyocytes. Plays a role in cardiomyocyte growth and cardiac hypertrophy in response to activation of the beta-adrenergic receptor by phenylephrine or isoproterenol. Required for normal adaptive cardiac hypertrophy in response to pressure overload. Plays a role in osteogenesis. The chain is A-kinase anchor protein 13 from Rattus norvegicus (Rat).